Consider the following 745-residue polypeptide: Meiotic driver SPOK3 (745 aa).

The stretch at 4-34 (KDRITQLLRELEEAKAREAQERCEKERLQLE) forms a coiled coil. Disordered regions lie at residues 173–222 (ELTQ…DGVG) and 407–487 (LSSA…VDPQ). Positions 188–197 (TSDRSLERRQ) are enriched in basic and acidic residues. Polar residues-rich tracts occupy residues 208–217 (KSKYICSNRQ) and 409–422 (SAPSSQNTDISEYT). Residues 214–325 (SNRQPDGVGI…LLLYVDRDDW (112 aa)) form a required for antidote activity region. Positions 466–482 (AKRERGPSSGGKDDGRS) are enriched in basic and acidic residues. Positions 491–745 (QYCTQACLLG…SPMATPSHGG (255 aa)) are required for poison activity.

The protein localises to the cytoplasm. It localises to the nucleus. In terms of biological role, promotes unequal transmission of alleles from the parental zygote to progeny spores by acting as poison/antidote system, leading to poisoning of progeny that do not inherit the allele. May possess DNA nuclease activity that leads to spore killing, and a kinase activity that confers resistance to the nuclease activity. The polypeptide is Meiotic driver SPOK3 (Podospora anserina (Pleurage anserina)).